The primary structure comprises 623 residues: Chaperone protein DnaK (623 aa).

A Phosphothreonine; by autocatalysis modification is found at Thr-197. A compositionally biased stretch (basic and acidic residues) spans Ala-595–Asp-615. The tract at residues Ala-595–Glu-623 is disordered.

This sequence belongs to the heat shock protein 70 family.

Its function is as follows. Acts as a chaperone. This chain is Chaperone protein DnaK, found in Campylobacter jejuni subsp. jejuni serotype O:6 (strain 81116 / NCTC 11828).